The following is a 302-amino-acid chain: Ornithine carbamoyltransferase (302 aa).

Carbamoyl phosphate contacts are provided by residues 52 to 55, glutamine 79, arginine 103, and 130 to 133; these read STRT and HPCQ. Residues asparagine 161, aspartate 221, and 225 to 226 contribute to the L-ornithine site; that span reads SM. Carbamoyl phosphate-binding positions include 261-262 and arginine 289; that span reads CL.

Belongs to the aspartate/ornithine carbamoyltransferase superfamily. OTCase family.

The protein localises to the cytoplasm. The catalysed reaction is carbamoyl phosphate + L-ornithine = L-citrulline + phosphate + H(+). The protein operates within amino-acid biosynthesis; L-arginine biosynthesis; L-arginine from L-ornithine and carbamoyl phosphate: step 1/3. Functionally, reversibly catalyzes the transfer of the carbamoyl group from carbamoyl phosphate (CP) to the N(epsilon) atom of ornithine (ORN) to produce L-citrulline. This is Ornithine carbamoyltransferase from Methanosarcina mazei (strain ATCC BAA-159 / DSM 3647 / Goe1 / Go1 / JCM 11833 / OCM 88) (Methanosarcina frisia).